Reading from the N-terminus, the 444-residue chain is Trigger factor (444 aa).

One can recognise a PPIase FKBP-type domain in the interval 166 to 251 (GDQIVIDFKG…VKAVKAPKPA (86 aa)).

Belongs to the FKBP-type PPIase family. Tig subfamily.

Its subcellular location is the cytoplasm. The catalysed reaction is [protein]-peptidylproline (omega=180) = [protein]-peptidylproline (omega=0). Involved in protein export. Acts as a chaperone by maintaining the newly synthesized protein in an open conformation. Functions as a peptidyl-prolyl cis-trans isomerase. The sequence is that of Trigger factor from Cereibacter sphaeroides (strain ATCC 17025 / ATH 2.4.3) (Rhodobacter sphaeroides).